The primary structure comprises 401 residues: Secreted LysM effector Blys8 (401 aa).

The signal sequence occupies residues 1-19 (MRTLAIFFIGAAVAAHVSP). In terms of domain architecture, LysM 1 spans 42-89 (TYYDEAYDKSYTCDDLLSAWVISKQDFESWNPAVGSDCKLVLGHSYCV). The segment covering 98-136 (STTTTTTTSTTTKTTTKTTTTTTAAPKPTSSAPSGPSPT) has biased composition (low complexity). The disordered stretch occupies residues 98 to 137 (STTTTTTTSTTTKTTTKTTTTTTAAPKPTSSAPSGPSPTQ). The LysM 2 domain maps to 146–193 (AYYFVKAGDTCDKISQMYGTFSTAQFIEWNPAVGSSCTGLWAGYYYCV). The interval 201–223 (SRTSTAGPTSTKPANGVTTPQPT) is disordered. Positions 233–279 (QFVYVQPGDQCGTVASRAGVSLSDFLQWNPSTGKDCSGLWANAYACV) constitute a LysM 3 domain.

The protein belongs to the secreted LysM effector family.

Might have a role in sequestration of chitin oligosaccharides (breakdown products of fungal cell walls that are released during invasion and act as triggers of host immunity) to dampen host defense. The polypeptide is Secreted LysM effector Blys8 (Beauveria bassiana (strain ARSEF 2860) (White muscardine disease fungus)).